The chain runs to 319 residues: HPr kinase/phosphorylase (319 aa).

Active-site residues include His-137 and Lys-158. 152–159 is an ATP binding site; that stretch reads GDSGVGKS. Ser-159 is a Mg(2+) binding site. Asp-176 serves as the catalytic Proton acceptor; for phosphorylation activity. Proton donor; for dephosphorylation activity. The important for the catalytic mechanism of both phosphorylation and dephosphorylation stretch occupies residues 201-210; the sequence is MEIRGLGIIN. Glu-202 serves as a coordination point for Mg(2+). The active site involves Arg-243. Residues 264-269 form an important for the catalytic mechanism of dephosphorylation region; sequence PVRPGR.

Belongs to the HPrK/P family. Homohexamer. Requires Mg(2+) as cofactor.

The enzyme catalyses [HPr protein]-L-serine + ATP = [HPr protein]-O-phospho-L-serine + ADP + H(+). The catalysed reaction is [HPr protein]-O-phospho-L-serine + phosphate + H(+) = [HPr protein]-L-serine + diphosphate. Catalyzes the ATP- as well as the pyrophosphate-dependent phosphorylation of a specific serine residue in HPr, a phosphocarrier protein of the phosphoenolpyruvate-dependent sugar phosphotransferase system (PTS). HprK/P also catalyzes the pyrophosphate-producing, inorganic phosphate-dependent dephosphorylation (phosphorolysis) of seryl-phosphorylated HPr (P-Ser-HPr). This is HPr kinase/phosphorylase (hprK) from Treponema pallidum (strain Nichols).